A 217-amino-acid polypeptide reads, in one-letter code: N-(5'-phosphoribosyl)anthranilate isomerase (217 aa).

The protein belongs to the TrpF family.

The enzyme catalyses N-(5-phospho-beta-D-ribosyl)anthranilate = 1-(2-carboxyphenylamino)-1-deoxy-D-ribulose 5-phosphate. The protein operates within amino-acid biosynthesis; L-tryptophan biosynthesis; L-tryptophan from chorismate: step 3/5. The chain is N-(5'-phosphoribosyl)anthranilate isomerase from Chlorobium chlorochromatii (strain CaD3).